Reading from the N-terminus, the 624-residue chain is Exocyst complex component EXO70B1 (624 aa).

Residues 148 to 176 (FGLNPQGDAGAMNHRFDSEEEEDDDRDFN) are disordered.

The protein belongs to the EXO70 family. In terms of assembly, interacts with EXO70B2, SEC5A and EXO84B. Binds to PUB18. Binds directly to B1L at the plasma membrane and in small vesicles. In terms of processing, target of the E3 ubiquitin-protein ligase PUB18 that mediates its ubiquitination and degradation via the 26S proteasome.

The protein localises to the cytoplasmic vesicle. It is found in the phagosome. The protein resides in the endomembrane system. Its subcellular location is the cell membrane. It localises to the vesicle. Functionally, component of an exocyst subcomplex specifically involved in autophagy-related, Golgi-independent membrane traffic to the vacuole. Regulates autophagosome formation and autophagy-related Golgi-independent import into the vacuole. Positive regulator of both abscisic acid (ABA)-promoted and mannitol (drought)-promoted stomatal closure. Involved in the regulation of lateral root formation. This Arabidopsis thaliana (Mouse-ear cress) protein is Exocyst complex component EXO70B1.